A 493-amino-acid polypeptide reads, in one-letter code: Cytoplasmic tRNA 2-thiolation protein 2 (493 aa).

Position 489 is a phosphoserine (serine 489).

The protein belongs to the CTU2/NCS2 family. Interacts with NCS6 and URM1. May act by forming a heterodimer with NCS6.

It localises to the cytoplasm. It functions in the pathway tRNA modification; 5-methoxycarbonylmethyl-2-thiouridine-tRNA biosynthesis. Its function is as follows. Plays a central role in 2-thiolation of mcm(5)S(2)U at tRNA wobble positions of tRNA(Lys), tRNA(Glu) and tRNA(Gln). May act by forming a heterodimer with NCS6 that ligates sulfur from thiocarboxylated URM1 onto the uridine of tRNAs at wobble position. Prior mcm(5) tRNA modification by the elongator complex is required for 2-thiolation. May also be involved in protein urmylation. This is Cytoplasmic tRNA 2-thiolation protein 2 from Saccharomyces cerevisiae (strain AWRI1631) (Baker's yeast).